The chain runs to 264 residues: S-methyl-5'-thioadenosine phosphorylase (264 aa).

Phosphate-binding positions include Ser14 and 55-56 (RH). Residue Met180 coordinates substrate. Thr181 contributes to the phosphate binding site. Residue 204–206 (DVD) participates in substrate binding.

It belongs to the PNP/MTAP phosphorylase family. MTAP subfamily. In terms of assembly, homodimer.

The enzyme catalyses S-methyl-5'-thioadenosine + phosphate = 5-(methylsulfanyl)-alpha-D-ribose 1-phosphate + adenine. Its pathway is amino-acid biosynthesis; L-methionine biosynthesis via salvage pathway; S-methyl-5-thio-alpha-D-ribose 1-phosphate from S-methyl-5'-thioadenosine (phosphorylase route): step 1/1. With respect to regulation, not inhibited by adenosine, potently inhibited by MT-DADMe-immucillin A. Catalyzes the reversible phosphorylation of S-methyl-5'-thioadenosine (MTA) to adenine and 5-methylthioribose-1-phosphate. Involved in the breakdown of MTA, a major by-product of polyamine biosynthesis. Responsible for the first step in the methionine salvage pathway after MTA has been generated from S-adenosylmethionine. Prefers MTA, with 2% activity on adenosine, 0.8% activity on S-adenosyl-L-homocysteine and no activity on other tested nucleosides. The sequence is that of S-methyl-5'-thioadenosine phosphorylase from Mycobacterium tuberculosis (strain ATCC 25618 / H37Rv).